The following is a 299-amino-acid chain: UPF0282 protein TK1681 (299 aa).

The protein belongs to the UPF0282 family.

In Thermococcus kodakarensis (strain ATCC BAA-918 / JCM 12380 / KOD1) (Pyrococcus kodakaraensis (strain KOD1)), this protein is UPF0282 protein TK1681.